The sequence spans 512 residues: Probable metalloreductase AIM14 (512 aa).

The next 7 helical transmembrane spans lie at 20 to 40, 61 to 81, 97 to 117, 132 to 152, 161 to 181, 191 to 211, and 218 to 235; these read IKYG…ILIC, PLFI…VFHV, MSYA…SIGL, VIIA…ILEG, LWNF…IISL, YFYV…CLHA, and YAIA…ERYA. A Ferric oxidoreductase domain is found at 94–206; the sequence is FGRMSYALLP…NITVWLFVGL (113 aa). The FAD-binding FR-type domain occupies 230 to 355; it reads IFERYAKSHS…GGSGISFALP (126 aa). Residues 427–436 show a composition bias toward low complexity; sequence ESLPSSETPS. The segment at 427–451 is disordered; it reads ESLPSSETPSRTVNDDSLSQDTRPK. Polar residues predominate over residues 437 to 447; it reads RTVNDDSLSQD.

This sequence belongs to the ferric reductase (FRE) family. AIM14 subfamily.

It is found in the membrane. Probable cell surface metalloreductase. May be involved in iron or copper homeostasis. This is Probable metalloreductase AIM14 (AIM14) from Debaryomyces hansenii (strain ATCC 36239 / CBS 767 / BCRC 21394 / JCM 1990 / NBRC 0083 / IGC 2968) (Yeast).